The chain runs to 192 residues: MLEKVYVALIHYPIKGKDGSIISTAVTNLDVHDIARTARTYNLKGYYIVTNLRAQQDMVSKMLKFWREGFGSRYNPSRAESLKLVKLKSYLEDVLEDIESVEGERPLIFFTSAKKRENDISFEEGRRIIIETEKPVLILLGTGWGLPDEILEISDYVLEPIRAQSDFNHLSVRAAAAIIIDRLIGENYARRD.

The protein to A.aeolicus AQ_054.

This is an uncharacterized protein from Thermotoga maritima (strain ATCC 43589 / DSM 3109 / JCM 10099 / NBRC 100826 / MSB8).